The sequence spans 367 residues: tRNA pseudouridine synthase D (367 aa).

The Nucleophile role is filled by Asp80. A TRUD domain is found at 156–316 (GIPNWFGEQR…LKQERRALRL (161 aa)).

This sequence belongs to the pseudouridine synthase TruD family.

It catalyses the reaction uridine(13) in tRNA = pseudouridine(13) in tRNA. Its function is as follows. Responsible for synthesis of pseudouridine from uracil-13 in transfer RNAs. In Xanthomonas campestris pv. campestris (strain B100), this protein is tRNA pseudouridine synthase D.